The chain runs to 605 residues: Cystathionine gamma-synthase-like enzyme iboG1 (605 aa).

Tyr289 is a binding site for substrate. Lys393 bears the N6-(pyridoxal phosphate)lysine mark.

The protein belongs to the trans-sulfuration enzymes family. Pyridoxal 5'-phosphate is required as a cofactor.

It participates in secondary metabolite biosynthesis. Its function is as follows. Cystathionine gamma-synthase-like enzyme; part of the gene cluster that mediates the biosynthesis of the psychoactive metabolites ibotenic acid and muscimol. The first committed step is glutamate hydroxylation by the 2-oxoglutarate-dependent dioxygenase iboH, and the last step is decarboxylation of ibotenic acid to muscimol by the decarboxylase iboD. The order of the intermediate reactions is somewhat ambiguous. IboA likely activates the carboxylic acid at position 5 to introduce an amide bond, and the flavin monooxygenase iboF generates the N-O bond. There are several options for the latter step. One option is that iboF directly hydroxylates the amide nitrogen formed by iboA to produce a hydroxamic acid species. Another option is that iboF hydroxylates an external N-containing compound, whose resulting N-O bond is subsequently introduced into the hydroxyglutamate scaffold. The paralogous PLP-dependent cystathionine gamma-synthase-like enzymes iboG1 and iboG2 are likely involved in substitution of the OH group at position 3 by the O-N moiety. The first cyclic intermediate is most probably tricholomic acid which is likely desaturated to ibotenic acid by the cytochrome P450 monooxygenase iboC. The chain is Cystathionine gamma-synthase-like enzyme iboG1 (iboG1) from Amanita muscaria (strain Koide BX008).